The primary structure comprises 433 residues: MIWEFTVLLSLVLGTGAVPLEDPEDGGKHWVVIVAGSNGWYNYRHQADACHAYQIVHRNGIPDEQIIVMMYDDIANSEDNPTPGIVINRPNGSDVYQGVLKDYTGEDVTPKNFLAVLRGDAEAVKGVGSGKVLKSGPRDHVFVYFTDHGATGILVFPNEDLHVKDLNETIRYMYEHKMYQKMVFYIEACESGSMMNHLPPDINVYATTAANPRESSYACYYDEQRSTFLGDWYSVNWMEDSDVEDLTKETLHKQYQLVKSHTNTSHVMQYGNKSISAMKLMQFQGLKHQASSPISLPAVSRLDLTPSPEVPLSIMKRKLMSTNDLQESRRLVQKIDRHLEARNIIEKSVRKIVTLVSGSAAEVDRLLSQRAPLTEHACYQTAVSHFRSHCFNWHNPTYEYALRHLYVLVNLCENPYPIDRIKLSMNKVCHGYY.

The signal sequence occupies residues 1-17; it reads MIWEFTVLLSLVLGTGA. A propeptide spanning residues 18–25 is cleaved from the precursor; the sequence is VPLEDPED. Asn91 is a glycosylation site (N-linked (GlcNAc...) asparagine). The active site involves His148. The N-linked (GlcNAc...) asparagine glycan is linked to Asn167. Cys189 functions as the Nucleophile in the catalytic mechanism. N-linked (GlcNAc...) asparagine glycosylation is found at Asn263 and Asn272. The propeptide occupies 324–433; that stretch reads DLQESRRLVQ…SMNKVCHGYY (110 aa). Disulfide bonds link Cys378-Cys412 and Cys390-Cys429.

This sequence belongs to the peptidase C13 family. Homodimer before autocatalytic removal of the propeptide. Monomer after autocatalytic processing. May interact with integrins. Activated by autocatalytic processing at pH 4. In terms of tissue distribution, detected in kidney (at protein level).

It localises to the lysosome. It carries out the reaction Hydrolysis of proteins and small molecule substrates at -Asn-|-Xaa- bonds.. Its function is as follows. Has a strict specificity for hydrolysis of asparaginyl bonds. Can also cleave aspartyl bonds slowly, especially under acidic conditions. Involved in the processing of proteins for MHC class II antigen presentation in the lysosomal/endosomal system. Also involved in MHC class I antigen presentation in cross-presenting dendritic cells by mediating cleavage and maturation of Perforin-2 (MPEG1), thereby promoting antigen translocation in the cytosol. Required for normal lysosomal protein degradation in renal proximal tubules. Required for normal degradation of internalized EGFR. Plays a role in the regulation of cell proliferation via its role in EGFR degradation. The protein is Legumain (LGMN) of Bos taurus (Bovine).